A 271-amino-acid polypeptide reads, in one-letter code: Phosphatidylglycerol--prolipoprotein diacylglyceryl transferase (271 aa).

Helical transmembrane passes span 21–41 (ISVR…MWLA), 60–80 (LLFA…VLFY), 95–115 (VWTG…AMLW), 124–144 (FFGV…VGRL), 176–196 (SQLY…NWFI), 203–223 (GSVS…VEYV), and 230–250 (LGLF…MIIG). Arginine 143 serves as a coordination point for a 1,2-diacyl-sn-glycero-3-phospho-(1'-sn-glycerol).

The protein belongs to the Lgt family.

Its subcellular location is the cell inner membrane. The catalysed reaction is L-cysteinyl-[prolipoprotein] + a 1,2-diacyl-sn-glycero-3-phospho-(1'-sn-glycerol) = an S-1,2-diacyl-sn-glyceryl-L-cysteinyl-[prolipoprotein] + sn-glycerol 1-phosphate + H(+). The protein operates within protein modification; lipoprotein biosynthesis (diacylglyceryl transfer). Functionally, catalyzes the transfer of the diacylglyceryl group from phosphatidylglycerol to the sulfhydryl group of the N-terminal cysteine of a prolipoprotein, the first step in the formation of mature lipoproteins. This Vibrio vulnificus (strain CMCP6) protein is Phosphatidylglycerol--prolipoprotein diacylglyceryl transferase.